The primary structure comprises 508 residues: Lysine--tRNA ligase (508 aa).

Mg(2+)-binding residues include E403 and E410.

The protein belongs to the class-II aminoacyl-tRNA synthetase family. Homodimer. Requires Mg(2+) as cofactor.

It is found in the cytoplasm. It carries out the reaction tRNA(Lys) + L-lysine + ATP = L-lysyl-tRNA(Lys) + AMP + diphosphate. This is Lysine--tRNA ligase from Methanoculleus marisnigri (strain ATCC 35101 / DSM 1498 / JR1).